The following is a 467-amino-acid chain: uncharacterized protein (467 aa).

Positions 416-467 (KQQRAQTAVVGTTKELVSKATHMKPPRTPPGEAEHRKRSQSLAICQWNKNSR) are disordered. A compositionally biased stretch (polar residues) spans 455 to 467 (QSLAICQWNKNSR).

This is an uncharacterized protein from Homo sapiens (Human).